We begin with the raw amino-acid sequence, 564 residues long: Quinone-dependent D-lactate dehydrogenase (564 aa).

Positions Gly-36–Val-207 constitute an FAD-binding PCMH-type domain. FAD contacts are provided by residues Ala-70–Gly-74, Gly-78–Ser-79, Gly-137, Ser-144, Gly-154, and Val-256.

This sequence belongs to the quinone-dependent D-lactate dehydrogenase family. Requires FAD as cofactor.

The protein resides in the cell inner membrane. It catalyses the reaction (R)-lactate + a quinone = a quinol + pyruvate. Functionally, catalyzes the oxidation of D-lactate to pyruvate. This chain is Quinone-dependent D-lactate dehydrogenase, found in Haemophilus influenzae (strain ATCC 51907 / DSM 11121 / KW20 / Rd).